The chain runs to 331 residues: Tetraacyldisaccharide 4'-kinase (331 aa).

51-58 contacts ATP; that stretch reads TAGGAGKT.

Belongs to the LpxK family.

The catalysed reaction is a lipid A disaccharide + ATP = a lipid IVA + ADP + H(+). The protein operates within glycolipid biosynthesis; lipid IV(A) biosynthesis; lipid IV(A) from (3R)-3-hydroxytetradecanoyl-[acyl-carrier-protein] and UDP-N-acetyl-alpha-D-glucosamine: step 6/6. Functionally, transfers the gamma-phosphate of ATP to the 4'-position of a tetraacyldisaccharide 1-phosphate intermediate (termed DS-1-P) to form tetraacyldisaccharide 1,4'-bis-phosphate (lipid IVA). In Rhodospirillum rubrum (strain ATCC 11170 / ATH 1.1.1 / DSM 467 / LMG 4362 / NCIMB 8255 / S1), this protein is Tetraacyldisaccharide 4'-kinase.